Reading from the N-terminus, the 245-residue chain is 1-acyl-sn-glycerol-3-phosphate acyltransferase (245 aa).

M1 carries the post-translational modification N-formylmethionine. The HXXXXD motif motif lies at H73–D78.

It belongs to the 1-acyl-sn-glycerol-3-phosphate acyltransferase family.

The protein localises to the cell inner membrane. It catalyses the reaction a 1-acyl-sn-glycero-3-phosphate + an acyl-CoA = a 1,2-diacyl-sn-glycero-3-phosphate + CoA. It carries out the reaction a fatty acyl-[ACP] + a 1-acyl-sn-glycero-3-phosphate = a 1,2-diacyl-sn-glycero-3-phosphate + holo-[ACP]. It participates in phospholipid metabolism; CDP-diacylglycerol biosynthesis; CDP-diacylglycerol from sn-glycerol 3-phosphate: step 2/3. Converts lysophosphatidic acid (LPA) into phosphatidic acid by incorporating an acyl moiety at the 2 position. This enzyme can utilize either acyl-CoA or acyl-ACP as the fatty acyl donor. The chain is 1-acyl-sn-glycerol-3-phosphate acyltransferase (plsC) from Escherichia coli (strain K12).